The following is a 139-amino-acid chain: Putative nickel-responsive regulator (139 aa).

His-79, His-90, His-92, and Cys-98 together coordinate Ni(2+).

Belongs to the transcriptional regulatory CopG/NikR family. Ni(2+) serves as cofactor.

In terms of biological role, transcriptional regulator. This is Putative nickel-responsive regulator from Anaeromyxobacter dehalogenans (strain 2CP-1 / ATCC BAA-258).